Reading from the N-terminus, the 99-residue chain is uncharacterized protein (99 aa).

Belongs to the ycf15 family.

It localises to the plastid. Its subcellular location is the chloroplast. This is an uncharacterized protein from Saccharum hybrid (Sugarcane).